The sequence spans 471 residues: UDP-N-acetylmuramate--L-alanine ligase (471 aa).

An ATP-binding site is contributed by 114–120 (GTHGKTT).

Belongs to the MurCDEF family.

The protein resides in the cytoplasm. The catalysed reaction is UDP-N-acetyl-alpha-D-muramate + L-alanine + ATP = UDP-N-acetyl-alpha-D-muramoyl-L-alanine + ADP + phosphate + H(+). It participates in cell wall biogenesis; peptidoglycan biosynthesis. Functionally, cell wall formation. In Methylobacterium sp. (strain 4-46), this protein is UDP-N-acetylmuramate--L-alanine ligase.